Here is a 297-residue protein sequence, read N- to C-terminus: Large ribosomal subunit protein uL18 (297 aa).

Belongs to the universal ribosomal protein uL18 family. As to quaternary structure, component of the large ribosomal subunit (LSU).

Its subcellular location is the cytoplasm. It is found in the nucleus. Functionally, component of the ribosome, a large ribonucleoprotein complex responsible for the synthesis of proteins in the cell. The small ribosomal subunit (SSU) binds messenger RNAs (mRNAs) and translates the encoded message by selecting cognate aminoacyl-transfer RNA (tRNA) molecules. The large subunit (LSU) contains the ribosomal catalytic site termed the peptidyl transferase center (PTC), which catalyzes the formation of peptide bonds, thereby polymerizing the amino acids delivered by tRNAs into a polypeptide chain. The nascent polypeptides leave the ribosome through a tunnel in the LSU and interact with protein factors that function in enzymatic processing, targeting, and the membrane insertion of nascent chains at the exit of the ribosomal tunnel. The polypeptide is Large ribosomal subunit protein uL18 (RpL5) (Lysiphlebus testaceipes (Greenbugs aphid parastoid)).